Consider the following 213-residue polypeptide: 24 kDa ookinete surface protein (213 aa).

The signal sequence occupies residues 1 to 28 (MNFKYSFIFLFFIQLAIRYNNAKITVDT). In terms of domain architecture, EGF-like 1; truncated spans 30–59 (CKGGKLIQMSNHYECKCPSGYALKTENTCE). EGF-like domains are found at residues 60 to 108 (PIVK…NICK) and 108 to 148 (KPTR…GKCT). 6 disulfides stabilise this stretch: Cys-64–Cys-80, Cys-74–Cys-94, Cys-96–Cys-107, Cys-112–Cys-122, Cys-117–Cys-134, and Cys-136–Cys-147. The region spanning 151-175 (GETKCLLKCKAAEECKLTGKHYECV) is the EGF-like 4; truncated domain. A lipid anchor (GPI-anchor amidated asparagine) is attached at Asn-190. N-linked (GlcNAc...) asparagine glycosylation is present at Asn-190. Residues 191–213 (SSFMNGMSIISIIALLVIYVIVM) constitute a propeptide, removed in mature form.

The protein resides in the cell membrane. The chain is 24 kDa ookinete surface protein from Plasmodium berghei (strain Anka).